A 400-amino-acid chain; its full sequence is Argininosuccinate synthase (400 aa).

ATP is bound by residues 11–19 (AYSGGLDTS) and alanine 38. L-citrulline-binding residues include tyrosine 89 and serine 94. Glycine 119 contacts ATP. The L-aspartate site is built by threonine 121, asparagine 125, and aspartate 126. Asparagine 125 provides a ligand contact to L-citrulline. The L-citrulline site is built by arginine 129, serine 178, serine 187, glutamate 263, and tyrosine 275.

This sequence belongs to the argininosuccinate synthase family. Type 1 subfamily. Homotetramer.

It is found in the cytoplasm. The catalysed reaction is L-citrulline + L-aspartate + ATP = 2-(N(omega)-L-arginino)succinate + AMP + diphosphate + H(+). It participates in amino-acid biosynthesis; L-arginine biosynthesis; L-arginine from L-ornithine and carbamoyl phosphate: step 2/3. The protein is Argininosuccinate synthase of Desulfatibacillum aliphaticivorans.